The primary structure comprises 279 residues: Diaminopimelate epimerase 1 (279 aa).

Substrate contacts are provided by asparagine 13 and asparagine 66. Cysteine 75 functions as the Proton donor in the catalytic mechanism. Substrate contacts are provided by residues 76–77, asparagine 164, asparagine 197, and 215–216; these read GN and ER. Catalysis depends on cysteine 224, which acts as the Proton acceptor. 225–226 provides a ligand contact to substrate; it reads GT.

Belongs to the diaminopimelate epimerase family. As to quaternary structure, homodimer.

Its subcellular location is the cytoplasm. It catalyses the reaction (2S,6S)-2,6-diaminopimelate = meso-2,6-diaminopimelate. Its pathway is amino-acid biosynthesis; L-lysine biosynthesis via DAP pathway; DL-2,6-diaminopimelate from LL-2,6-diaminopimelate: step 1/1. In terms of biological role, catalyzes the stereoinversion of LL-2,6-diaminopimelate (L,L-DAP) to meso-diaminopimelate (meso-DAP), a precursor of L-lysine and an essential component of the bacterial peptidoglycan. This chain is Diaminopimelate epimerase 1, found in Nostoc sp. (strain PCC 7120 / SAG 25.82 / UTEX 2576).